We begin with the raw amino-acid sequence, 384 residues long: Dual-specificity RNA methyltransferase RlmN (384 aa).

The active-site Proton acceptor is E105. In terms of domain architecture, Radical SAM core spans 111–350 (EDDRATLCVS…TIVRKTRGDD (240 aa)). A disulfide bond links C118 and C355. [4Fe-4S] cluster is bound by residues C125, C129, and C132. S-adenosyl-L-methionine-binding positions include 179–180 (GE), S211, 233–235 (SLH), and N312. C355 acts as the S-methylcysteine intermediate in catalysis.

The protein belongs to the radical SAM superfamily. RlmN family. Requires [4Fe-4S] cluster as cofactor.

It localises to the cytoplasm. It catalyses the reaction adenosine(2503) in 23S rRNA + 2 reduced [2Fe-2S]-[ferredoxin] + 2 S-adenosyl-L-methionine = 2-methyladenosine(2503) in 23S rRNA + 5'-deoxyadenosine + L-methionine + 2 oxidized [2Fe-2S]-[ferredoxin] + S-adenosyl-L-homocysteine. The enzyme catalyses adenosine(37) in tRNA + 2 reduced [2Fe-2S]-[ferredoxin] + 2 S-adenosyl-L-methionine = 2-methyladenosine(37) in tRNA + 5'-deoxyadenosine + L-methionine + 2 oxidized [2Fe-2S]-[ferredoxin] + S-adenosyl-L-homocysteine. Specifically methylates position 2 of adenine 2503 in 23S rRNA and position 2 of adenine 37 in tRNAs. m2A2503 modification seems to play a crucial role in the proofreading step occurring at the peptidyl transferase center and thus would serve to optimize ribosomal fidelity. The chain is Dual-specificity RNA methyltransferase RlmN from Escherichia coli O17:K52:H18 (strain UMN026 / ExPEC).